Here is a 327-residue protein sequence, read N- to C-terminus: rRNA 2'-O-methyltransferase fibrillarin (327 aa).

The tract at residues 1–96 (MGTDYRNSGR…GFKGGAKTMV (96 aa)) is disordered. Asymmetric dimethylarginine is present on residues Arg-10, Arg-19, Arg-44, Arg-49, Arg-55, Arg-65, Arg-69, and Arg-78. Residues 22 to 56 (GNDRRDSGRSFGDRRPERPDFKRGDGGRGFGDRRG) are compositionally biased toward basic and acidic residues. A compositionally biased stretch (gly residues) spans 73–90 (DGPGGRGGPGGPGGGFKG). S-adenosyl-L-methionine-binding positions include 181-182 (TT), 200-201 (EF), 225-226 (DA), and 245-248 (DVAQ).

This sequence belongs to the methyltransferase superfamily. Fibrillarin family. In terms of assembly, component of box C/D small nucleolar ribonucleoprotein (snoRNP) particles. It is associated with the U3, U8 and U13 small nuclear RNAs. In terms of processing, by homology to other fibrillarins, some or all of the N-terminal domain arginines are modified to asymmetric dimethylarginine (DMA).

The protein localises to the nucleus. It is found in the nucleolus. The catalysed reaction is L-glutaminyl-[histone H2A] + S-adenosyl-L-methionine = N(5)-methyl-L-glutaminyl-[histone H2A] + S-adenosyl-L-homocysteine + H(+). In terms of biological role, S-adenosyl-L-methionine-dependent methyltransferase that has the ability to methylate both RNAs and proteins. Involved in pre-rRNA processing. Utilizes the methyl donor S-adenosyl-L-methionine to catalyze the site-specific 2'-hydroxyl methylation of ribose moieties in pre-ribosomal RNA. Site specificity is provided by a guide RNA that base pairs with the substrate. Methylation occurs at a characteristic distance from the sequence involved in base pairing with the guide RNA. Also acts as a protein methyltransferase by mediating methylation of 'Gln-105' of histone H2A (H2AQ105me), a modification that impairs binding of the FACT complex and is specifically present at 35S ribosomal DNA locus. This is rRNA 2'-O-methyltransferase fibrillarin from Giardia intestinalis (Giardia lamblia).